We begin with the raw amino-acid sequence, 835 residues long: Transcription intermediary factor 1-beta (835 aa).

A compositionally biased stretch (low complexity) spans 14 to 24; sequence AATAASAASGS. The tract at residues 14-57 is disordered; the sequence is AATAASAASGSPGSGEGSAGGEKRPAASSAAAASASASSPAGGG. Phosphoserine occurs at positions 24, 27, and 31. Lys-36 is covalently cross-linked (Glycyl lysine isopeptide (Lys-Gly) (interchain with G-Cter in SUMO2)). Over residues 39–53 the composition is skewed to low complexity; it reads AASSAAAASASASSP. The residue at position 52 (Ser-52) is a Phosphoserine. The segment at 67–123 adopts an RING-type zinc-finger fold; it reads CGVCRERLRPERDPRLLPCLHSACSACLGPATPAAANNSGDGGSAGDGAMVDCPVCK. Lys-129 participates in a covalent cross-link: Glycyl lysine isopeptide (Lys-Gly) (interchain with G-Cter in SUMO2). Phosphoserine is present on Ser-140. Residues 150–197 form a B box-type 1; atypical zinc finger; the sequence is DANQCCTSCEDNAPATSYCVECSEPLCETCVEAHQRVKYTKDHTVRST. Residues Cys-155, Cys-158, Cys-179, and His-183 each coordinate Zn(2+). A Glycyl lysine isopeptide (Lys-Gly) (interchain with G-Cter in SUMO2) cross-link involves residue Lys-201. The B box-type 2 zinc finger occupies 206 to 247; that stretch reads ERTVYCNVHKHEPLVLFCESCDTLTCRDCQLNAHKDHQYQFL. The Zn(2+) site is built by Cys-211, His-214, Cys-234, and His-239. Residues 248–378 form a leucine zipper alpha helical coiled-coil region region; sequence EDAVRNQRKL…LIYFQLHRAL (131 aa). Residues 249–378 are interaction with MAGEC2; the sequence is DAVRNQRKLL…LIYFQLHRAL (130 aa). Glycyl lysine isopeptide (Lys-Gly) (interchain with G-Cter in SUMO2) cross-links involve residues Lys-256 and Lys-263. The residue at position 268 (Lys-268) is an N6-acetyllysine. Lys-274 is covalently cross-linked (Glycyl lysine isopeptide (Lys-Gly) (interchain with G-Cter in SUMO2)). The residue at position 306 (Lys-306) is an N6-acetyllysine; alternate. A Glycyl lysine isopeptide (Lys-Gly) (interchain with G-Cter in SUMO2); alternate cross-link involves residue Lys-306. Lys-321 participates in a covalent cross-link: Glycyl lysine isopeptide (Lys-Gly) (interchain with G-Cter in SUMO2). Lys-342 is subject to N6-acetyllysine. A Glycyl lysine isopeptide (Lys-Gly) (interchain with G-Cter in SUMO2) cross-link involves residue Lys-368. The tract at residues 368–372 is involved in binding PPP1CA; the sequence is KLIYF. The residue at position 379 (Lys-379) is an N6-acetyllysine; alternate. Lys-379 participates in a covalent cross-link: Glycyl lysine isopeptide (Lys-Gly) (interchain with G-Cter in SUMO2); alternate. Lys-379 participates in a covalent cross-link: Glycyl lysine isopeptide (Lys-Gly) (interchain with G-Cter in SUMO1); alternate. Lys-409 is covalently cross-linked (Glycyl lysine isopeptide (Lys-Gly) (interchain with G-Cter in SUMO2)). The interval 413–481 is disordered; sequence ERPGTNSTGP…SRSGEGEVSG (69 aa). At Ser-419 the chain carries Phosphoserine. Lys-436 is covalently cross-linked (Glycyl lysine isopeptide (Lys-Gly) (interchain with G-Cter in SUMO2)). Over residues 436–445 the composition is skewed to polar residues; it reads KQGSGSSQPM. A phosphoserine mark is found at Ser-439 and Ser-441. A Glycyl lysine isopeptide (Lys-Gly) (interchain with G-Cter in SUMO2); alternate cross-link involves residue Lys-470. A Glycyl lysine isopeptide (Lys-Gly) (interchain with G-Cter in SUMO1); alternate cross-link involves residue Lys-470. At Arg-471 the chain carries Citrulline. Ser-472 carries the post-translational modification Phosphoserine. At Arg-473 the chain carries Citrulline. Residues Ser-474, Ser-480, and Ser-490 each carry the phosphoserine modification. The interval 477-514 is HP1 box; that stretch reads GEVSGLMRKVPRVSLERLDLDLTSDSQPPVFKVFPGST. A PxVxL motif motif is present at residues 482–495; the sequence is LMRKVPRVSLERLD. Thr-499 bears the Phosphothreonine mark. Ser-502 carries the post-translational modification Phosphoserine. Lys-508 is covalently cross-linked (Glycyl lysine isopeptide (Lys-Gly) (interchain with G-Cter in SUMO2)). A Glycyl lysine isopeptide (Lys-Gly) (interchain with G-Cter in SUMO2); alternate cross-link involves residue Lys-555. Lys-555 participates in a covalent cross-link: Glycyl lysine isopeptide (Lys-Gly) (interchain with G-Cter in SUMO); alternate. A Glycyl lysine isopeptide (Lys-Gly) (interchain with G-Cter in SUMO2) cross-link involves residue Lys-576. Position 595 is a phosphoserine (Ser-595). The PHD-type zinc-finger motif lies at 626-673; that stretch reads ATICRVCQKPGDLVMCNQCEFCFHLDCHLPSLQDVPGEEWSCSLCHVL. A Glycyl lysine isopeptide (Lys-Gly) (interchain with G-Cter in SUMO) cross-link involves residue Lys-677. A phosphoserine mark is found at Ser-684, Ser-690, and Ser-698. One can recognise a Bromo domain in the interval 696–800; sequence KLSPANQRKC…RFFETRMNDA (105 aa). Residue Lys-751 forms a Glycyl lysine isopeptide (Lys-Gly) (interchain with G-Cter in SUMO2); alternate linkage. Lys-751 is covalently cross-linked (Glycyl lysine isopeptide (Lys-Gly) (interchain with G-Cter in SUMO1); alternate). Lys-751 is covalently cross-linked (Glycyl lysine isopeptide (Lys-Gly) (interchain with G-Cter in SUMO); alternate). Ser-753 is modified (phosphoserine). At Tyr-756 the chain carries Phosphotyrosine. Ser-758 carries the post-translational modification Phosphoserine. Residues Lys-771, Lys-775, and Lys-780 each carry the N6-acetyllysine; alternate modification. Residues Lys-771, Lys-775, and Lys-780 each participate in a glycyl lysine isopeptide (Lys-Gly) (interchain with G-Cter in SUMO2); alternate cross-link. Lys-780 participates in a covalent cross-link: Glycyl lysine isopeptide (Lys-Gly) (interchain with G-Cter in SUMO1); alternate. At Ser-785 the chain carries Phosphoserine. Residue Lys-805 forms a Glycyl lysine isopeptide (Lys-Gly) (interchain with G-Cter in SUMO2) linkage. Ser-825 carries the post-translational modification Phosphoserine; by ATM and ATR and dsDNA kinase.

Belongs to the TRIM/RBCC family. Interacts with ZNF382. Interacts with SETX. Oligomer; the RBCC domain homotrimerizes and interacts with one molecule of KRAB to form the KRAB-KAP1 corepressor complex. Binding to a KRAB domain is an absolute requirement for silencing gene expression. Interacts with CEBPB and NR3C1. Interacts with a number of KRAB-ZFP proteins including ZNF10, ZFP53, ZFP68 and ZNF256. Interacts with NCOR1, NR3C1 and CHD3. Interacts with CEBPB (via the RING-type and PHD-type zinc fingers). Component of a ternary complex that includes TRIM28, a HP1 protein (CBX1, CBX3 OR CBX5), a KRAB domain-containing protein, and DNA. Interacts with CBX5 (via the PxVxL motif); the interaction occurs in interphase nuclei and competes for binding POGZ. Interacts with POGZ; the interaction competes for interaction with CBX5. Interacts with SETDB1; the interaction is enhanced by KAP1 sumoylation, stimulates SETDB1 histone methyltransferase activity and gene silencing. Interacts (via the PHD-type zinc finger) with UBE2I; the interaction is required for sumoylation and repressor activity. Component of the TRIM28/KAP1-ERBB4-MDM2 complex involved in connecting growth factor and DNA damage responses. Interacts directly with ERBB4; the interaction represses ERBB4-mediated transcription activity. Interacts with MDM2; the interaction contributes to p53/TP53 inactivation. Component of the TRIM28/KAP1-MDM2-p53/TP53; involved in regulating p53/TP53 stabilization and activity. Interacts (via the leucine zipper alpha helical coiled-coil) with E2F1 (central region); the interaction inhibits E2F1 acetylation and transcriptional activity. Interacts with PPP1CA; the interaction dephosphorylates TRIM28 at Ser-824 and forms a complex at the p21 promoter site. Interacts with PPP1CB; the interaction is weak but is increased on dephosphorylation at Ser-824. Interacts with SMARCAD1. Interacts with, and sumoylates IRF7. Interacts with MAGEC2. Part of a complex composed of TRIM28, HDAC1, HDAC2 and EHMT2. Interacts with AICDA. The large PER complex involved in the histone methylation is composed of at least PER2, CBX3, TRIM28, SUV39H1 and/or SUV39H2; CBX3 mediates the formation of the complex. Interacts with NR4A3; the interactions potentiates NR4A3 activity on NurRE promoter. Interacts (unphosphorylated or phosphorylated form) with ZBTB1 (via BTB domain). Probably part of a corepressor complex containing ZNF304, TRIM28, SETDB1 and DNMT1. Interacts with ATRX. Forms a complex with ATRX, SETDB1 and ZNF274. Interacts with ZFP568; the interaction mediates ZFP568 transcriptional repression activity. Interacts with RRP1B. Interacts with CRY1. Interacts with ZNF263; recruited to the SIX3 promoter along with other proteins involved in chromatin modification and transcriptional corepression where it contributes to transcriptional repression. Interacts with CYREN (via XLF motif). Interacts with TRIM17; this interaction prevents TRIM28 activity. Interacts with ZNF746. Interacts with PHF13. Interacts with ZNF354C. Interacts with ZNF432; the interaction is independent of PARP1. In terms of processing, ATM-induced phosphorylation on Ser-825 represses sumoylation leading to the de-repression of expression of a subset of genes involved in cell cycle control and apoptosis in response to genotoxic stress. Dephosphorylation by the phosphatases, PPP1CA and PP1CB forms, allows sumoylation and expression of TRIM28 target genes. Sumoylation/desumoylation events regulate TRIM28-mediated transcriptional repression. Sumoylation is required for interaction with CHD3 and SETDB1 and the corepressor activity. Represses and is repressed by Ser-824 phosphorylation. Enhances the TRIM28 corepressor activity, inhibiting transcriptional activity of a number of genes including GADD45A and CDKN1A/p21. Lys-555, Lys-780 and Lys-805 are the major sites of sumoylation. In response to Dox-induced DNA damage, enhanced phosphorylation on Ser-825 prevents sumoylation and allows de-repression of CDKN1A/p21. Post-translationally, auto-ubiquitinated; enhanced by MAGEA2 and MAGEC2. In terms of processing, citrullinated by PADI4. ADP-ribosylated by SIRT6, promoting TRIM28/KAP1 interaction with CBX5, thereby contributing to the packaging of LINE-1 retrotransposon elements into transcriptionally repressive heterochromatin.

The protein localises to the nucleus. It carries out the reaction S-ubiquitinyl-[E2 ubiquitin-conjugating enzyme]-L-cysteine + [acceptor protein]-L-lysine = [E2 ubiquitin-conjugating enzyme]-L-cysteine + N(6)-ubiquitinyl-[acceptor protein]-L-lysine.. It functions in the pathway protein modification; protein sumoylation. Its function is as follows. Nuclear corepressor for KRAB domain-containing zinc finger proteins (KRAB-ZFPs). Mediates gene silencing by recruiting CHD3, a subunit of the nucleosome remodeling and deacetylation (NuRD) complex, and SETDB1 (which specifically methylates histone H3 at 'Lys-9' (H3K9me)) to the promoter regions of KRAB target genes. Enhances transcriptional repression by coordinating the increase in H3K9me, the decrease in histone H3 'Lys-9 and 'Lys-14' acetylation (H3K9ac and H3K14ac, respectively) and the disposition of HP1 proteins to silence gene expression. Recruitment of SETDB1 induces heterochromatinization. May play a role as a coactivator for CEBPB and NR3C1 in the transcriptional activation of ORM1. Also a corepressor for ERBB4. Inhibits E2F1 activity by stimulating E2F1-HDAC1 complex formation and inhibiting E2F1 acetylation. May serve as a partial backup to prevent E2F1-mediated apoptosis in the absence of RB1. Important regulator of CDKN1A/p21(CIP1). Has E3 SUMO-protein ligase activity toward itself via its PHD-type zinc finger. Also specifically sumoylates IRF7, thereby inhibiting its transactivation activity. Ubiquitinates p53/TP53 leading to its proteasomal degradation; the function is enhanced by MAGEC2 and MAGEA2, and possibly MAGEA3 and MAGEA6. Mediates the nuclear localization of KOX1, ZNF268 and ZNF300 transcription factors. In association with isoform 2 of ZFP90, is required for the transcriptional repressor activity of FOXP3 and the suppressive function of regulatory T-cells (Treg). Probably forms a corepressor complex required for activated KRAS-mediated promoter hypermethylation and transcriptional silencing of tumor suppressor genes (TSGs) or other tumor-related genes in colorectal cancer (CRC) cells. Required to maintain a transcriptionally repressive state of genes in undifferentiated embryonic stem cells (ESCs). In ESCs, in collaboration with SETDB1, is also required for H3K9me3 and silencing of endogenous and introduced retroviruses in a DNA-methylation independent-pathway. Associates at promoter regions of tumor suppressor genes (TSGs) leading to their gene silencing. The SETDB1-TRIM28-ZNF274 complex may play a role in recruiting ATRX to the 3'-exons of zinc finger genes with atypical chromatin signatures to establish or maintain/protect H3K9me3 at these transcriptionally active regions. The protein is Transcription intermediary factor 1-beta of Rattus norvegicus (Rat).